Consider the following 279-residue polypeptide: Fatty-acid-binding protein 1 (279 aa).

Positions 103, 116, and 183 each coordinate dodecanoate.

Belongs to the chalcone isomerase family. In terms of tissue distribution, expressed in developing cotyledons, young seedlings, roots, seeds, embryos, macrospores, preanthesis and tapetum. Restricted to developing and reproductive tissues.

It is found in the plastid. The protein resides in the chloroplast stroma. In terms of biological role, fatty-acid-binding protein. Interacts preferentially with saturated fatty acid. May be involved in alpha-linolenic (C18:3) metabolism. This Arabidopsis thaliana (Mouse-ear cress) protein is Fatty-acid-binding protein 1 (FAP1).